The chain runs to 124 residues: CD59 glycoprotein (124 aa).

An N-terminal signal peptide occupies residues Met1–Ser24. One can recognise a UPAR/Ly6 domain in the interval Ser25–Gly101. Cystine bridges form between Cys28/Cys51, Cys31/Cys38, Cys44/Cys64, Cys70/Cys88, and Cys89/Cys94. A glycan (N-linked (GlcNAc...) asparagine) is linked at Asn37. The GPI-anchor amidated glycine moiety is linked to residue Gly101. Positions Thr102–Leu124 are cleaved as a propeptide — removed in mature form.

Interacts with T-cell surface antigen CD2. Post-translationally, N- and O-glycosylated.

Its subcellular location is the cell membrane. It localises to the secreted. Potent inhibitor of the complement membrane attack complex (MAC) action, which protects self-cells from damage during complement activation. Acts by binding to the beta-haipins of C8 (C8A and C8B) components of the assembling MAC, forming an intermolecular beta-sheet that prevents incorporation of the multiple copies of C9 required for complete formation of the osmolytic pore. The polypeptide is CD59 glycoprotein (Oryctolagus cuniculus (Rabbit)).